The sequence spans 2225 residues: Multifunctional protein CAD (2225 aa).

Alanine 2 is modified (N-acetylalanine). Residues 2–365 (AALVLEDGSV…TVKEATAGNP (364 aa)) are GATase (Glutamine amidotransferase). L-glutamine is bound by residues serine 44, glycine 222, and glycine 224. A Glutamine amidotransferase type-1 domain is found at 177–363 (RILALDCGLK…LETVKEATAG (187 aa)). Cysteine 252 functions as the Nucleophile; for GATase activity in the catalytic mechanism. The L-glutamine site is built by leucine 253, glutamine 256, asparagine 294, glycine 296, and phenylalanine 297. Active-site for GATase activity residues include histidine 336 and glutamate 338. The tract at residues 366-394 (GGQTVRERLTERLCPPGIPTPGSGLPPPR) is linker. The tract at residues 395–933 (KVLILGSGGL…TTHDLTFRTP (539 aa)) is CPSase A. The segment at 395 to 1455 (KVLILGSGGL…APPLKVHVDC (1061 aa)) is CPSase (Carbamoyl phosphate synthase). Phosphothreonine; by MAPK1 is present on threonine 456. Residues arginine 515, arginine 555, glycine 561, glycine 562, lysine 592, glutamate 599, glycine 625, isoleucine 626, histidine 627, glutamine 668, and glutamate 682 each coordinate ATP. An ATP-grasp 1 domain is found at 519 to 711 (AARMAEIGEH…LAYVAAKLAL (193 aa)). Mg(2+) contacts are provided by glutamine 668, glutamate 682, and asparagine 684. Residues glutamine 668, glutamate 682, and asparagine 684 each contribute to the Mn(2+) site. N6-acetyllysine is present on lysine 747. Residues 934 to 1455 (HVLVLGSGVY…APPLKVHVDC (522 aa)) form a CPSase B region. Serine 1038 carries the post-translational modification Phosphoserine. The region spanning 1052 to 1243 (SRLLDTIGIS…LVALATRVIM (192 aa)) is the ATP-grasp 2 domain. ATP is bound by residues arginine 1088, lysine 1127, isoleucine 1129, glutamate 1134, glycine 1159, valine 1160, histidine 1161, serine 1162, glutamine 1202, and glutamate 1214. Residues glutamine 1202, glutamate 1214, and asparagine 1216 each coordinate Mg(2+). Positions 1202, 1214, and 1216 each coordinate Mn(2+). The MGS-like domain maps to 1308–1462 (FKIPKKNILL…VDCMTSQKLV (155 aa)). Serine 1406 carries the post-translational modification Phosphoserine; by PKA. N6-acetyllysine is present on lysine 1411. Residues 1456–1788 (MTSQKLVRLP…VKGTVRRVVL (333 aa)) form a DHOase (dihydroorotase) region. Residues histidine 1471 and histidine 1473 each coordinate Zn(2+). Positions 1475 and 1505 each coordinate (S)-dihydroorotate. 5 residues coordinate Zn(2+): lysine 1556, histidine 1590, cysteine 1613, histidine 1614, and glutamate 1637. Lysine 1556 is subject to N6-carboxylysine. A (S)-dihydroorotate-binding site is contributed by arginine 1661. Residue aspartate 1686 coordinates Zn(2+). Residue aspartate 1686 is the For DHOase activity of the active site. Histidine 1690 and proline 1702 together coordinate (S)-dihydroorotate. A linker region spans residues 1789 to 1917 (RGEVAYIDGQ…GLLHPQTSPL (129 aa)). The disordered stretch occupies residues 1811–1899 (KWPQGAVPQL…YPPPPVPRQA (89 aa)). Positions 1825–1834 (PATSEMTTTP) are enriched in polar residues. Phosphoserine; by RPS6KB1 and PKA is present on serine 1859. Residues 1866–1878 (EEPKEKSSRKVAE) show a composition bias toward basic and acidic residues. The residue at position 1873 (serine 1873) is a Phosphoserine; by PKC; in vitro. Phosphothreonine is present on threonine 1884. 2 positions are modified to phosphoserine: serine 1900 and serine 1938. Positions 1918–2225 (LHSLVGQHIL…ALLATVLGRF (308 aa)) are ATCase (Aspartate transcarbamylase). Carbamoyl phosphate contacts are provided by arginine 1975 and threonine 1976. Lysine 2003 lines the L-aspartate pocket. Carbamoyl phosphate-binding residues include arginine 2024, histidine 2052, and glutamine 2055. The L-aspartate site is built by arginine 2085 and arginine 2146. Carbamoyl phosphate contacts are provided by methionine 2185 and proline 2186.

This sequence in the N-terminal section; belongs to the CarA family. In the 2nd section; belongs to the CarB family. The protein in the 3rd section; belongs to the metallo-dependent hydrolases superfamily. DHOase family. CAD subfamily. It in the C-terminal section; belongs to the aspartate/ornithine carbamoyltransferase superfamily. ATCase family. As to quaternary structure, homohexamer. Interacts with CIPC. The cofactor is Zn(2+). Requires Mg(2+) as cofactor. It depends on Mn(2+) as a cofactor. Post-translationally, activated by MAP kinase (Erk1/2) phosphorylation just prior to the S phase of the cell cycle, when the demand for pyrimidine nucleotides is greatest, and down-regulated as the cells emerge from S phase by protein kinase A (PKA) phosphorylation. Phosphorylation at Ser-1859 by RPS6KB1 downstream of MTOR promotes oligomerization and stimulates dihydroorotase activity. Phosphorylation at Ser-1406 reduces sensitivity to feedback inhibition by UTP.

The protein localises to the cytoplasm. It localises to the nucleus. The enzyme catalyses hydrogencarbonate + L-glutamine + 2 ATP + H2O = carbamoyl phosphate + L-glutamate + 2 ADP + phosphate + 2 H(+). It catalyses the reaction L-glutamine + H2O = L-glutamate + NH4(+). It carries out the reaction hydrogencarbonate + NH4(+) + 2 ATP = carbamoyl phosphate + 2 ADP + phosphate + 2 H(+). The catalysed reaction is carbamoyl phosphate + L-aspartate = N-carbamoyl-L-aspartate + phosphate + H(+). The enzyme catalyses (S)-dihydroorotate + H2O = N-carbamoyl-L-aspartate + H(+). The protein operates within pyrimidine metabolism; UMP biosynthesis via de novo pathway; (S)-dihydroorotate from bicarbonate: step 1/3. It participates in pyrimidine metabolism; UMP biosynthesis via de novo pathway; (S)-dihydroorotate from bicarbonate: step 2/3. Its pathway is pyrimidine metabolism; UMP biosynthesis via de novo pathway; (S)-dihydroorotate from bicarbonate: step 3/3. With respect to regulation, allosterically regulated and controlled by phosphorylation. 5-phosphoribose 1-diphosphate (PRPP) is an activator while UMP and UTP are inhibitors of the CPSase reaction. Multifunctional protein that encodes the first 3 enzymatic activities of the de novo pyrimidine pathway: carbamoylphosphate synthetase (CPSase; EC 6.3.5.5), aspartate transcarbamylase (ATCase; EC 2.1.3.2) and dihydroorotase (DHOase; EC 3.5.2.3). The CPSase-function is accomplished in 2 steps, by a glutamine-dependent amidotransferase activity (GATase) that binds and cleaves glutamine to produce ammonia, followed by an ammonium-dependent carbamoyl phosphate synthetase, which reacts with the ammonia, hydrogencarbonate and ATP to form carbamoyl phosphate. The endogenously produced carbamoyl phosphate is sequestered and channeled to the ATCase active site. ATCase then catalyzes the formation of carbamoyl-L-aspartate from L-aspartate and carbamoyl phosphate. In the last step, DHOase catalyzes the cyclization of carbamoyl aspartate to dihydroorotate. This Homo sapiens (Human) protein is Multifunctional protein CAD.